The chain runs to 146 residues: Large ribosomal subunit protein uL15 (146 aa).

The interval 1–65 (MSDIQLNTLK…GQMPLQRRLP (65 aa)) is disordered. Residues 24–34 (RGIGSGLGKTA) show a composition bias toward gly residues.

This sequence belongs to the universal ribosomal protein uL15 family. In terms of assembly, part of the 50S ribosomal subunit.

Binds to the 23S rRNA. This is Large ribosomal subunit protein uL15 from Bordetella parapertussis (strain 12822 / ATCC BAA-587 / NCTC 13253).